The following is a 193-amino-acid chain: Tellurium resistance protein TerZ (193 aa).

It belongs to the CAPAB/TerDEXZ family.

In terms of biological role, not known; seems to contribute to the tellurium resistance (Ter) mechanism. Also involved in phage inhibition (Phi) and colicin resistance (PacB). The polypeptide is Tellurium resistance protein TerZ (terZ) (Serratia marcescens).